Reading from the N-terminus, the 287-residue chain is Lycopene elongase/hydratase (287 aa).

7 helical membrane passes run 15–35, 37–57, 87–107, 137–157, 166–186, 218–238, and 265–285; these read ISWI…AGEI, WLFW…MYGI, TLLW…FIFG, FIDA…GATI, MWIA…LGAV, LLAA…GIAI, and VFLW…IAIH.

Belongs to the UbiA prenyltransferase family.

It is found in the cell membrane. The catalysed reaction is all-trans-lycopene + dimethylallyl diphosphate + A + H2O = nonaflavuxanthin + AH2 + diphosphate. It catalyses the reaction nonaflavuxanthin + dimethylallyl diphosphate + A + H2O = flavuxanthin + AH2 + diphosphate. It participates in carotenoid biosynthesis. In terms of biological role, catalyzes the elongation of the C(40) carotenoid all-trans-lycopene to the acyclic C(50) carotenoid flavuxanthin during decaprenoxanthin biosynthesis. Acts as a bifunctional enzyme that catalyzes the elongation of lycopene by attaching a C(5) isoprene unit at C-2, as well as the hydroxylation of the new isoprene unit. The enzyme acts at both ends of the substrate, forming the C(50) carotenoid flavuxanthin via the C(45) intermediate nonaflavuxanthin. The polypeptide is Lycopene elongase/hydratase (Corynebacterium glutamicum (strain ATCC 13032 / DSM 20300 / JCM 1318 / BCRC 11384 / CCUG 27702 / LMG 3730 / NBRC 12168 / NCIMB 10025 / NRRL B-2784 / 534)).